The sequence spans 236 residues: Dolichol-phosphate mannosyltransferase (236 aa).

GDP-alpha-D-mannose contacts are provided by Pro9, Tyr11, Glu13, Ile40, Asp42, Asp95, Ala96, Asp97, Arg124, Val160, Arg211, and Lys217. Residue Asp97 coordinates Mg(2+). Asp97 contributes to the Mn(2+) binding site.

It belongs to the glycosyltransferase 2 family. In terms of assembly, component of the dolichol-phosphate mannose (DPM) synthase complex composed of dpm1, dpm2 and dpm3. Mg(2+) is required as a cofactor. Requires Mn(2+) as cofactor. Ca(2+) serves as cofactor.

Its subcellular location is the endoplasmic reticulum. The catalysed reaction is a di-trans,poly-cis-dolichyl phosphate + GDP-alpha-D-mannose = a di-trans,poly-cis-dolichyl beta-D-mannosyl phosphate + GDP. It participates in protein modification; protein glycosylation. Transfers mannose from GDP-mannose to dolichol monophosphate to form dolichol phosphate mannose (Dol-P-Man) which is the mannosyl donor in pathways leading to N-glycosylation, glycosyl phosphatidylinositol membrane anchoring, and O-mannosylation of proteins. The polypeptide is Dolichol-phosphate mannosyltransferase (Schizosaccharomyces pombe (strain 972 / ATCC 24843) (Fission yeast)).